The primary structure comprises 276 residues: NH(3)-dependent NAD(+) synthetase (276 aa).

Residue 43–50 (GISGGVDS) participates in ATP binding. Asp-49 serves as a coordination point for Mg(2+). Residue Arg-146 coordinates deamido-NAD(+). Thr-166 contributes to the ATP binding site. Mg(2+) is bound at residue Glu-171. Residues Lys-179 and Asp-186 each coordinate deamido-NAD(+). 2 residues coordinate ATP: Lys-195 and Thr-217. 266 to 267 (HK) provides a ligand contact to deamido-NAD(+).

Belongs to the NAD synthetase family. In terms of assembly, homodimer.

It catalyses the reaction deamido-NAD(+) + NH4(+) + ATP = AMP + diphosphate + NAD(+) + H(+). Its pathway is cofactor biosynthesis; NAD(+) biosynthesis; NAD(+) from deamido-NAD(+) (ammonia route): step 1/1. In terms of biological role, catalyzes the ATP-dependent amidation of deamido-NAD to form NAD. Uses ammonia as a nitrogen source. This chain is NH(3)-dependent NAD(+) synthetase, found in Vibrio cholerae serotype O1 (strain ATCC 39541 / Classical Ogawa 395 / O395).